The chain runs to 151 residues: Putative pre-16S rRNA nuclease (151 aa).

This sequence belongs to the YqgF nuclease family.

It is found in the cytoplasm. In terms of biological role, could be a nuclease involved in processing of the 5'-end of pre-16S rRNA. The sequence is that of Putative pre-16S rRNA nuclease from Nitrosospira multiformis (strain ATCC 25196 / NCIMB 11849 / C 71).